The following is a 336-amino-acid chain: tRNA (guanine(37)-N(1))-methyltransferase Trm5b (336 aa).

S-adenosyl-L-methionine contacts are provided by residues arginine 186, 223–224 (DI), 251–252 (DV), and asparagine 265.

It belongs to the class I-like SAM-binding methyltransferase superfamily. TRM5/TYW2 family. As to quaternary structure, monomer.

The protein resides in the cytoplasm. The catalysed reaction is guanosine(37) in tRNA + S-adenosyl-L-methionine = N(1)-methylguanosine(37) in tRNA + S-adenosyl-L-homocysteine + H(+). In terms of biological role, specifically methylates the N1 position of guanosine-37 in various tRNAs. The chain is tRNA (guanine(37)-N(1))-methyltransferase Trm5b (trm5b) from Methanocaldococcus jannaschii (strain ATCC 43067 / DSM 2661 / JAL-1 / JCM 10045 / NBRC 100440) (Methanococcus jannaschii).